The following is an 83-amino-acid chain: Small ribosomal subunit protein bS20 (83 aa).

The segment at 1–21 is disordered; sequence MPNIKSAIKRVRTTETAEERN. Residues 12–21 show a composition bias toward basic and acidic residues; that stretch reads RTTETAEERN.

Belongs to the bacterial ribosomal protein bS20 family.

In terms of biological role, binds directly to 16S ribosomal RNA. This Staphylococcus epidermidis (strain ATCC 35984 / DSM 28319 / BCRC 17069 / CCUG 31568 / BM 3577 / RP62A) protein is Small ribosomal subunit protein bS20.